The following is a 90-amino-acid chain: Putative membrane protein insertion efficiency factor (90 aa).

This sequence belongs to the UPF0161 family.

The protein resides in the cell inner membrane. Could be involved in insertion of integral membrane proteins into the membrane. This Thermosynechococcus vestitus (strain NIES-2133 / IAM M-273 / BP-1) protein is Putative membrane protein insertion efficiency factor.